Consider the following 616-residue polypeptide: MIPLRSSVTTQGRNAAGARALWRAAGLKDGDFNKPIIAIANSYTQFVPGHVHLKDVGDIVAGAIREAGGVPREFNTIAVDDGIAMGHGGMLYSLPSREIISDSVEYMVNAHAADAIVCISNCDKITPGMLNAAMRLNIPAIFVSGGPMEAGKAVVVDGVAHTPTDLITAISASANDSVDDRGLSIVENSACPTCGSCSGMFTANSMNSLTEALGLSLPGNGSTLATHAARRALFENAGRTIVDMCQRYYNHDDDSVLPRNVANKHAFDNAMTLDMAMGGSTNTVLHILAAAQEGDIDFDLADIDRLSREVPCLSKVAPNSNYHMEDVHRAGGIPAILGELNRAGLLHDDVHAVHAQSLSDWLATWDIRTDNPTQIALDLFHAAPGGVRTTVPFSTDNKWDELDTDSENGCIRDVDHAYTADGGLVILRGNLAEDGAVIKAAGIDESLWHFSGPAHVLESQEDAVNAILNKQIKPGEVVVIRYEGPAGGPGMQEMLHPTAFLKGAGLGTQCALITDGRFSGGSSGISVGHISPEAAHGGLIGLIHDGDTVTIDVHKRQLTLDVPEDVLAERREKMNVSEHPWRPLNRQRRVSKALQAYASMATSADTGAVRKVNDRR.

Asp81 contributes to the Mg(2+) binding site. Cys122 contacts [2Fe-2S] cluster. Positions 123 and 124 each coordinate Mg(2+). An N6-carboxylysine modification is found at Lys124. Position 197 (Cys197) interacts with [2Fe-2S] cluster. Glu493 is a binding site for Mg(2+). Ser519 functions as the Proton acceptor in the catalytic mechanism.

Belongs to the IlvD/Edd family. As to quaternary structure, homodimer. [2Fe-2S] cluster is required as a cofactor. Requires Mg(2+) as cofactor.

It carries out the reaction (2R)-2,3-dihydroxy-3-methylbutanoate = 3-methyl-2-oxobutanoate + H2O. It catalyses the reaction (2R,3R)-2,3-dihydroxy-3-methylpentanoate = (S)-3-methyl-2-oxopentanoate + H2O. Its pathway is amino-acid biosynthesis; L-isoleucine biosynthesis; L-isoleucine from 2-oxobutanoate: step 3/4. The protein operates within amino-acid biosynthesis; L-valine biosynthesis; L-valine from pyruvate: step 3/4. In terms of biological role, functions in the biosynthesis of branched-chain amino acids. Catalyzes the dehydration of (2R,3R)-2,3-dihydroxy-3-methylpentanoate (2,3-dihydroxy-3-methylvalerate) into 2-oxo-3-methylpentanoate (2-oxo-3-methylvalerate) and of (2R)-2,3-dihydroxy-3-methylbutanoate (2,3-dihydroxyisovalerate) into 2-oxo-3-methylbutanoate (2-oxoisovalerate), the penultimate precursor to L-isoleucine and L-valine, respectively. This is Dihydroxy-acid dehydratase from Corynebacterium kroppenstedtii (strain DSM 44385 / JCM 11950 / CIP 105744 / CCUG 35717).